A 103-amino-acid polypeptide reads, in one-letter code: Phosphoribosyl-ATP pyrophosphatase (103 aa).

Belongs to the PRA-PH family.

It localises to the cytoplasm. The catalysed reaction is 1-(5-phospho-beta-D-ribosyl)-ATP + H2O = 1-(5-phospho-beta-D-ribosyl)-5'-AMP + diphosphate + H(+). It participates in amino-acid biosynthesis; L-histidine biosynthesis; L-histidine from 5-phospho-alpha-D-ribose 1-diphosphate: step 2/9. This Cereibacter sphaeroides (strain ATCC 17025 / ATH 2.4.3) (Rhodobacter sphaeroides) protein is Phosphoribosyl-ATP pyrophosphatase.